Here is an 806-residue protein sequence, read N- to C-terminus: Ribonucleoside-diphosphate reductase large subunit (806 aa).

The 91-residue stretch at 1–91 (MYVLNRKGEE…TDNLHKNTSD (91 aa)) folds into the ATP-cone domain. Residues 5–6 (NR), 11–17 (EDISFDQ), Thr-52, and Asp-56 contribute to the ATP site. Residue Ser-215 coordinates GDP. Cys-216 and Cys-442 form a disulfide bridge. Residues 224–226 (DSI), Lys-241, Arg-254, and 261–262 (RG) contribute to the dTTP site. Asn-425 lines the GDP pocket. Asn-425 (proton acceptor) is an active-site residue. Residue Cys-427 is the Cysteine radical intermediate of the active site. GDP contacts are provided by residues Glu-429 and 604-607 (TAST). Glu-429 acts as the Proton acceptor in catalysis.

Belongs to the ribonucleoside diphosphate reductase large chain family. In terms of assembly, heterodimer of a large and a small subunit.

The catalysed reaction is a 2'-deoxyribonucleoside 5'-diphosphate + [thioredoxin]-disulfide + H2O = a ribonucleoside 5'-diphosphate + [thioredoxin]-dithiol. With respect to regulation, under complex allosteric control mediated by deoxynucleoside triphosphates and ATP binding to separate specificity and activation sites on the large subunit. The type of nucleotide bound at the specificity site determines substrate preference. It seems probable that ATP makes the enzyme reduce CDP and UDP, dGTP favors ADP reduction and dTTP favors GDP reduction. Stimulated by ATP and inhibited by dATP binding to the activity site. Its function is as follows. Provides the precursors necessary for DNA synthesis. Catalyzes the biosynthesis of deoxyribonucleotides from the corresponding ribonucleotides. The sequence is that of Ribonucleoside-diphosphate reductase large subunit (RNR1) from Plasmodium falciparum (isolate Dd2).